Consider the following 456-residue polypeptide: Two pore potassium channel c (456 aa).

Residues 1–19 (MDTEPLLSPLSPSPHLLHP) are compositionally biased toward low complexity. The interval 1 to 112 (MDTEPLLSPL…PPSLFDFIGG (112 aa)) is disordered. At 1–152 (MDTEPLLSPL…RNPPPPPRRP (152 aa)) the chain is on the cytoplasmic side. Residues 52–67 (HPPPPPPPPPPPPPPP) are compositionally biased toward pro residues. A helical transmembrane segment spans residues 153 to 173 (AIVLHAFLFLLAYLAMGVTFY). The pore-forming intramembrane region spans 192-211 (DALYFCIVTLCTIGYGDITP). Residues 223–243 (FVLIGFGFVDILLSGMVSYVL) traverse the membrane as a helical segment. At 244-279 (DLQEHLLITALKNPRSVRKHRHNYIFDLKKGRMRVR) the chain is on the cytoplasmic side. Residues 280–300 (MKVALALTVVAICVGVGAAVL) traverse the membrane as a helical segment. The pore-forming intramembrane region spans 310-329 (DAVYLAVMSVTTVGYGDHAF). Residues 336–356 (LFASAWLLVSTLAVARAFLYL) traverse the membrane as a helical segment. Residues 357-456 (AEMRIDKRHR…LNEKKKGKKS (100 aa)) are Cytoplasmic-facing. EF-hand domains lie at 373–408 (LSRDMTVSEFLAADIDNNGYVTKSEFVVYKLKEMGK) and 412–447 (KDIMMICDQFQRMDSGNCGKITLSDLLESHQLVTDL). Ca(2+) contacts are provided by D386, D388, N390, Y392, E397, D425, K431, and D436.

This sequence belongs to the two pore domain potassium channel (TC 1.A.1.7) family. Homodimer.

Its subcellular location is the membrane. Its function is as follows. Inward-rectifying potassium channel. This chain is Two pore potassium channel c (TPKC), found in Oryza sativa subsp. japonica (Rice).